Consider the following 406-residue polypeptide: COP9 signalosome complex subunit 4 (406 aa).

Residues 197 to 366 (YRRKFIEAAQ…GIVHFETREP (170 aa)) form the PCI domain.

The protein belongs to the CSN4 family. As to quaternary structure, component of the CSN complex, probably composed of cops1, cops2, cops3, cops4, cops5, cops6, cops7, cops8 and cops9.

It is found in the cytoplasm. The protein resides in the nucleus. It localises to the cytoplasmic vesicle. The protein localises to the secretory vesicle. Its subcellular location is the synaptic vesicle. In terms of biological role, component of the COP9 signalosome complex (CSN), a complex involved in various cellular and developmental processes. The CSN complex is an essential regulator of the ubiquitin (Ubl) conjugation pathway by mediating the deneddylation of the cullin subunits of E3 ligase complexes, leading to modify the Ubl ligase activity. The protein is COP9 signalosome complex subunit 4 (cops4) of Danio rerio (Zebrafish).